The sequence spans 84 residues: Transcription elongation factor 1 homolog (84 aa).

Residues C26, C29, C50, and C53 each coordinate Zn(2+).

This sequence belongs to the ELOF1 family.

It localises to the nucleus. Its function is as follows. Transcription elongation factor implicated in the maintenance of proper chromatin structure in actively transcribed regions. The sequence is that of Transcription elongation factor 1 homolog from Caenorhabditis elegans.